The chain runs to 377 residues: Spermidine/putrescine import ATP-binding protein PotA (377 aa).

The ABC transporter domain occupies 18-248 (IRLSGISKSF…PKNLFVARFI (231 aa)). 50–57 (GPSGCGKT) lines the ATP pocket.

The protein belongs to the ABC transporter superfamily. Spermidine/putrescine importer (TC 3.A.1.11.1) family. In terms of assembly, the complex is composed of two ATP-binding proteins (PotA), two transmembrane proteins (PotB and PotC) and a solute-binding protein (PotD).

It is found in the cell inner membrane. The enzyme catalyses ATP + H2O + polyamine-[polyamine-binding protein]Side 1 = ADP + phosphate + polyamineSide 2 + [polyamine-binding protein]Side 1.. Its function is as follows. Part of the ABC transporter complex PotABCD involved in spermidine/putrescine import. Responsible for energy coupling to the transport system. The protein is Spermidine/putrescine import ATP-binding protein PotA of Vibrio parahaemolyticus serotype O3:K6 (strain RIMD 2210633).